The following is a 305-amino-acid chain: Putative lipid kinase USA300HOU_0749 (305 aa).

The 137-residue stretch at 3–139 (NKYTHGVLFY…YDVIKINNQY (137 aa)) folds into the DAGKc domain. ATP contacts are provided by residues serine 44, 74–80 (GDGTVNE), and threonine 101. 3 residues coordinate Mg(2+): serine 220, aspartate 223, and glutamate 225. Glutamate 281 (proton acceptor) is an active-site residue.

It belongs to the diacylglycerol/lipid kinase family. It depends on Mg(2+) as a cofactor.

Its function is as follows. May catalyze the ATP-dependent phosphorylation of lipids other than diacylglycerol (DAG). This is Putative lipid kinase USA300HOU_0749 from Staphylococcus aureus (strain USA300 / TCH1516).